The following is a 230-amino-acid chain: uncharacterized protein (230 aa).

An HTH gntR-type domain is found at 12–80 (KNLSYVLAEK…PRIGTRVMPQ (69 aa)). The H-T-H motif DNA-binding region spans 40–59 (EIELGEQFGVSRTAVREAVK).

This is an uncharacterized protein from Escherichia coli (strain K12).